Consider the following 174-residue polypeptide: Secretion monitor (174 aa).

An N-terminal signal peptide occupies residues M1 to A35.

Belongs to the SecM family.

It is found in the cytoplasm. The protein resides in the cytosol. Its subcellular location is the periplasm. In terms of biological role, regulates secA expression by translational coupling of the secM secA operon. Translational pausing at a specific Pro residue 5 residues before the end of the protein may allow disruption of a mRNA repressor helix that normally suppresses secA translation initiation. The protein is Secretion monitor of Photorhabdus laumondii subsp. laumondii (strain DSM 15139 / CIP 105565 / TT01) (Photorhabdus luminescens subsp. laumondii).